The sequence spans 1730 residues: Meiosis regulator and mRNA stability factor 1 (1730 aa).

Position 65 is a phosphoserine (Ser65). Residues 352-489 form the NYN domain; it reads IGVFWDIENC…ALLHHANQLI (138 aa). The segment covering 655–668 has biased composition (basic and acidic residues); that stretch reads MESKSGNRNSDHQQ. The disordered stretch occupies residues 655 to 722; that stretch reads MESKSGNRNS…VNSPVEKKKR (68 aa). Tyr698 carries the post-translational modification Phosphotyrosine. The 80-residue stretch at 781-860 folds into the RRM domain; sequence VDIQVSNVDY…KKILVSLSTG (80 aa). 2 consecutive HTH OST-type domains span residues 865 to 939 and 993 to 1069; these read SLSL…SPLG and SLKV…HNKP. 2 positions are modified to phosphoserine: Ser1081 and Ser1083. HTH OST-type domains follow at residues 1089-1163, 1165-1241, 1249-1324, 1325-1400, 1401-1475, and 1476-1550; these read QLIQ…LTHR, QVKR…RKRE, RTKQ…TEVE, RFKA…INRK, SLRS…VKLT, and SLYL…LKND. The interval 1667–1714 is disordered; the sequence is VQKGNLSCDSSPSSPAASPAPPGPSSEAPRPLFSKDAVESPAKKQPKN. Ser1684 is subject to Phosphoserine.

In terms of assembly, interacts with LIMK2. Predominantly present in oocytes and barely detectable in granulosa cells (at protein level).

Its subcellular location is the peroxisome. Its function is as follows. Essential regulator of oogenesis required for female meiotic progression to repress transposable elements and preventing their mobilization, which is essential for the germline integrity. Probably acts via some RNA metabolic process, equivalent to the piRNA system in males, which mediates the repression of transposable elements during meiosis by forming complexes composed of RNAs and governs the methylation and subsequent repression of transposons. Also required to protect from DNA double-strand breaks. The polypeptide is Meiosis regulator and mRNA stability factor 1 (Marf1) (Mus musculus (Mouse)).